A 614-amino-acid polypeptide reads, in one-letter code: Fimbrin (614 aa).

EF-hand domains lie at 16–50 (EEIL…DSKK) and 51–86 (GSYD…LKKG). Asp29, Asp31, Tyr35, Thr40, Asp66, Ser68, Arg70, and Asp75 together coordinate Ca(2+). Actin-binding regions lie at residues 98-368 (TIKG…GLEP) and 369-614 (LNEE…LMAV). 4 Calponin-homology (CH) domains span residues 112–233 (EEER…RRGL), 261–364 (LPPE…NTHP), 385–495 (EREA…RMNI), and 508–614 (TLSD…LMAV).

It is found in the cytoplasm. The protein resides in the cytoskeleton. Its subcellular location is the actin patch. Functionally, binds to actin, and functionally associates with actin structures involved in the development and maintenance of cell polarity. Plays a role in cytokinesis. Plays important roles in mating and in spore formation. This Schizosaccharomyces pombe (strain 972 / ATCC 24843) (Fission yeast) protein is Fimbrin (fim1).